Here is a 319-residue protein sequence, read N- to C-terminus: MSILVAGLTLVSAFLITFLLMPSLIRYFRAKKEGQQIREEGPTWHEKKAGTPTMGGLLFILSAALTCGWVGAWQGQLNGTLGALLFTLIAYGLIGMWDDSIKIFNHQNEGFKPWQKFLAQVVGAMVFAVIYQHEGFQMGFGLTDWGWFYALFIIFWMVGFSNAVNLTDGLDGLVTGLATISFAAYLVLALVQGQTEVALFCLAMIGTLLGFFPFNHKPAKIFMGDMGSLALGASLAAVALVLHHEWSLLIIGIVYVLETLSVILQVAYFRRTGKRLFKMTPIHHTFEMMGWSEWKIDGVFWLVGLIAGALTVATILFLG.

10 helical membrane passes run 1-21 (MSIL…FLLM), 53-73 (TMGG…VGAW), 77-97 (LNGT…IGMW), 117-137 (FLAQ…EGFQ), 140-160 (FGLT…MVGF), 172-192 (GLVT…ALVQ), 195-215 (TEVA…FPFN), 221-241 (IFMG…VALV), 249-269 (LIIG…VAYF), and 298-318 (GVFW…ILFL).

This sequence belongs to the glycosyltransferase 4 family. MraY subfamily. The cofactor is Mg(2+).

The protein localises to the cell membrane. It catalyses the reaction UDP-N-acetyl-alpha-D-muramoyl-L-alanyl-gamma-D-glutamyl-L-lysyl-D-alanyl-D-alanine + di-trans,octa-cis-undecaprenyl phosphate = Mur2Ac(oyl-L-Ala-gamma-D-Glu-L-Lys-D-Ala-D-Ala)-di-trans,octa-cis-undecaprenyl diphosphate + UMP. It functions in the pathway cell wall biogenesis; peptidoglycan biosynthesis. Its function is as follows. Catalyzes the initial step of the lipid cycle reactions in the biosynthesis of the cell wall peptidoglycan: transfers peptidoglycan precursor phospho-MurNAc-pentapeptide from UDP-MurNAc-pentapeptide onto the lipid carrier undecaprenyl phosphate, yielding undecaprenyl-pyrophosphoryl-MurNAc-pentapeptide, known as lipid I. This is Phospho-N-acetylmuramoyl-pentapeptide-transferase from Limosilactobacillus fermentum (strain NBRC 3956 / LMG 18251) (Lactobacillus fermentum).